Here is a 158-residue protein sequence, read N- to C-terminus: Ribosomal RNA large subunit methyltransferase H (158 aa).

S-adenosyl-L-methionine contacts are provided by residues Leu-74, Gly-105, and 124 to 129 (LGPLTL).

This sequence belongs to the RNA methyltransferase RlmH family. Homodimer.

It localises to the cytoplasm. It carries out the reaction pseudouridine(1915) in 23S rRNA + S-adenosyl-L-methionine = N(3)-methylpseudouridine(1915) in 23S rRNA + S-adenosyl-L-homocysteine + H(+). Its function is as follows. Specifically methylates the pseudouridine at position 1915 (m3Psi1915) in 23S rRNA. This is Ribosomal RNA large subunit methyltransferase H from Xylella fastidiosa (strain 9a5c).